Reading from the N-terminus, the 424-residue chain is Endochitinase 1 (424 aa).

The signal sequence occupies residues 1–22 (MPSLFAQSLAIIATLQATLGLA). The 364-residue stretch at 39–402 (YVNAVYFTNW…GTSSNKLGGP (364 aa)) folds into the GH18 domain. Residues Asn-74, Asn-78, and Asn-96 are each glycosylated (N-linked (GlcNAc...) asparagine). Residues 103 to 104 (GN) and 130 to 133 (GGWT) contribute to the chitin site. The active-site Proton donor is the Glu-172. Chitin contacts are provided by residues Tyr-173 and 238-241 (MAYD). Asn-248 and Asn-347 each carry an N-linked (GlcNAc...) asparagine glycan. Trp-379 is a binding site for chitin. The disordered stretch occupies residues 385–412 (RQGPDSLIGTSSNKLGGPDTTENLLNYP). Over residues 392–408 (IGTSSNKLGGPDTTENL) the composition is skewed to polar residues.

The protein belongs to the glycosyl hydrolase 18 family. Chitinase class V subfamily.

Its subcellular location is the secreted. The enzyme catalyses Random endo-hydrolysis of N-acetyl-beta-D-glucosaminide (1-&gt;4)-beta-linkages in chitin and chitodextrins.. Secreted chitinase involved in the degradation of chitin, a component of the cell walls of fungi and exoskeletal elements of some animals (including worms and arthropods). Participates in the infection process and directly acts in the penetration process of the host cuticle. The polypeptide is Endochitinase 1 (chit1) (Metarhizium robertsii (strain ARSEF 23 / ATCC MYA-3075) (Metarhizium anisopliae (strain ARSEF 23))).